The chain runs to 270 residues: MSGQVRVAIVGAGGRMGRTLIEAAYNHDHILLGAAIERAGSSLVGVDAGELAGVGKLKVMIMDSLDYATDDFDVLIDFTAPDASIVHLDWCVRHKKAMVIGTTGFNHAQKEQINAFAEQTPVVMAPNMSVGVNLMWKLLELAAEVMGDYTDIEIIEGHHRHKKDAPSGTALKMGEVIAKTLGRDLEKCAVYGREGITGERDRETIGFATIRAGDLVGEHTAMFADIGERLEITHKASSRMTFANGAMRAAHWLVEQKPGLYDMQQVLGLH.

Residues 11–16 (GAGGRM) and Glu-37 contribute to the NAD(+) site. Arg-38 serves as a coordination point for NADP(+). Residues 101 to 103 (GTT) and 125 to 128 (APNM) each bind NAD(+). The Proton donor/acceptor role is filled by His-158. Position 159 (His-159) interacts with (S)-2,3,4,5-tetrahydrodipicolinate. Lys-162 functions as the Proton donor in the catalytic mechanism. (S)-2,3,4,5-tetrahydrodipicolinate is bound at residue 168 to 169 (GT).

It belongs to the DapB family.

It is found in the cytoplasm. It catalyses the reaction (S)-2,3,4,5-tetrahydrodipicolinate + NAD(+) + H2O = (2S,4S)-4-hydroxy-2,3,4,5-tetrahydrodipicolinate + NADH + H(+). The enzyme catalyses (S)-2,3,4,5-tetrahydrodipicolinate + NADP(+) + H2O = (2S,4S)-4-hydroxy-2,3,4,5-tetrahydrodipicolinate + NADPH + H(+). It functions in the pathway amino-acid biosynthesis; L-lysine biosynthesis via DAP pathway; (S)-tetrahydrodipicolinate from L-aspartate: step 4/4. Its function is as follows. Catalyzes the conversion of 4-hydroxy-tetrahydrodipicolinate (HTPA) to tetrahydrodipicolinate. The sequence is that of 4-hydroxy-tetrahydrodipicolinate reductase from Shewanella baltica (strain OS223).